Consider the following 523-residue polypeptide: Butyrophilin subfamily 2 member A2 (523 aa).

Residues 1 to 32 (MEPAAALHFSLPASLLLLLLLLLLSLCALVSA) form the signal peptide. Over 33 to 265 (QFTVVGPANP…AVILTASPWM (233 aa)) the chain is Extracellular. The 112-residue stretch at 34–145 (FTVVGPANPI…SYDEAILRLV (112 aa)) folds into the Ig-like V-type domain. N-linked (GlcNAc...) asparagine glycans are attached at residues N50, N118, N220, and N226. C55 and C129 form a disulfide bridge. The Ig-like C2-type domain maps to 153–234 (PLIEIKAQED…VNNTLLGQEK (82 aa)). A helical membrane pass occupies residues 266–286 (VSMTVILAVFIIFMAVSICCI). Residues 286-321 (IKKLQREKKILSGEKKVEQEEKEIAQQLQEELRWRR) adopt a coiled-coil conformation. The Cytoplasmic segment spans residues 287–523 (KKLQREKKIL…LHRVGTHQSL (237 aa)). A B30.2/SPRY domain is found at 309 to 502 (IAQQLQEELR…IFICPALTGA (194 aa)).

The protein belongs to the immunoglobulin superfamily. BTN/MOG family. N-glycosylated. As to expression, highly expressed in brain, bone marrow, small intestine, muscle, spleen and pancreas. Moderate expression was seen in lung, liver and kidney.

The protein resides in the membrane. Functionally, inhibits the proliferation of CD4 and CD8 T-cells activated by anti-CD3 antibodies, T-cell metabolism and IL2 and IFNG secretion. The protein is Butyrophilin subfamily 2 member A2 (BTN2A2) of Homo sapiens (Human).